The following is a 393-amino-acid chain: Branched-chain amino acid aminotransferase 1, mitochondrial (393 aa).

Residues 1-34 (MIHRGLWLHNLVQSYRVGSSSSSSTLFKLVYRYN) constitute a mitochondrion transit peptide. R138 contributes to the pyridoxal 5'-phosphate binding site. The active-site Proton acceptor is the K240. K240 is modified (N6-(pyridoxal phosphate)lysine). E276 contacts pyridoxal 5'-phosphate.

This sequence belongs to the class-IV pyridoxal-phosphate-dependent aminotransferase family. Requires pyridoxal 5'-phosphate as cofactor. Expressed specifically in lupulin glands.

Its subcellular location is the mitochondrion. It carries out the reaction L-isoleucine + 2-oxoglutarate = (S)-3-methyl-2-oxopentanoate + L-glutamate. The catalysed reaction is L-leucine + 2-oxoglutarate = 4-methyl-2-oxopentanoate + L-glutamate. It catalyses the reaction L-valine + 2-oxoglutarate = 3-methyl-2-oxobutanoate + L-glutamate. It functions in the pathway amino-acid biosynthesis; L-isoleucine biosynthesis; L-isoleucine from 2-oxobutanoate: step 4/4. Its pathway is amino-acid biosynthesis; L-leucine biosynthesis; L-leucine from 3-methyl-2-oxobutanoate: step 4/4. It participates in amino-acid biosynthesis; L-valine biosynthesis; L-valine from pyruvate: step 4/4. Converts 2-oxo acids to branched-chain amino acids (BCAA). Shows no kinetic preferences corresponding to anabolic or catabolic functions, but likely involved in BCAA catabolism. The sequence is that of Branched-chain amino acid aminotransferase 1, mitochondrial from Humulus lupulus (European hop).